Consider the following 463-residue polypeptide: Glycine--tRNA ligase (463 aa).

R98 and E174 together coordinate substrate. Residues 206–208 (RNE), 216–221 (FRTREF), 290–291 (EL), and 334–337 (GADR) each bind ATP. Residue 221-225 (FEQME) participates in substrate binding. Residue 330-334 (EPSLG) participates in substrate binding.

It belongs to the class-II aminoacyl-tRNA synthetase family. As to quaternary structure, homodimer.

It is found in the cytoplasm. The catalysed reaction is tRNA(Gly) + glycine + ATP = glycyl-tRNA(Gly) + AMP + diphosphate. Functionally, catalyzes the attachment of glycine to tRNA(Gly). This chain is Glycine--tRNA ligase, found in Staphylococcus haemolyticus (strain JCSC1435).